The sequence spans 312 residues: Fe-S cluster assembly protein DRE2 (312 aa).

The interval 7 to 139 is N-terminal SAM-like domain; that stretch reads LSDVPRVLLL…VKPVFEEQSV (133 aa). The tract at residues 140 to 204 is linker; that stretch reads LLPFSINRSQ…EDELINEDEL (65 aa). [2Fe-2S] cluster-binding residues include Cys-214, Cys-225, Cys-228, and Cys-230. The tract at residues 214 to 230 is fe-S binding site A; sequence CRPKAGKRRRACKDCTC. [4Fe-4S] cluster is bound by residues Cys-275, Cys-278, Cys-286, and Cys-289. 2 consecutive short sequence motifs (cx2C motif) follow at residues 275-278 and 286-289; these read CGNC and CDGC. The interval 275–289 is fe-S binding site B; sequence CGNCSLGDAFRCDGC.

Belongs to the anamorsin family. As to quaternary structure, monomer. Interacts with TAH18. Interacts with MIA40. Requires [2Fe-2S] cluster as cofactor. [4Fe-4S] cluster is required as a cofactor.

The protein localises to the cytoplasm. It is found in the mitochondrion intermembrane space. Component of the cytosolic iron-sulfur (Fe-S) protein assembly (CIA) machinery required for the maturation of extramitochondrial Fe-S proteins. Part of an electron transfer chain functioning in an early step of cytosolic Fe-S biogenesis, facilitating the de novo assembly of a [4Fe-4S] cluster on the scaffold complex CFD1-NBP35. Electrons are transferred to DRE2 from NADPH via the FAD- and FMN-containing protein TAH18. TAH18-DRE2 are also required for the assembly of the diferric tyrosyl radical cofactor of ribonucleotide reductase (RNR), probably by providing electrons for reduction during radical cofactor maturation in the catalytic small subunit RNR2. In Arthroderma otae (strain ATCC MYA-4605 / CBS 113480) (Microsporum canis), this protein is Fe-S cluster assembly protein DRE2.